The following is a 358-amino-acid chain: Aminomethyltransferase (358 aa).

The protein belongs to the GcvT family. In terms of assembly, the glycine cleavage system is composed of four proteins: P, T, L and H.

It carries out the reaction N(6)-[(R)-S(8)-aminomethyldihydrolipoyl]-L-lysyl-[protein] + (6S)-5,6,7,8-tetrahydrofolate = N(6)-[(R)-dihydrolipoyl]-L-lysyl-[protein] + (6R)-5,10-methylene-5,6,7,8-tetrahydrofolate + NH4(+). The glycine cleavage system catalyzes the degradation of glycine. This Francisella tularensis subsp. tularensis (strain FSC 198) protein is Aminomethyltransferase.